The following is a 303-amino-acid chain: Mycothiol acetyltransferase (303 aa).

D33 contributes to the 1D-myo-inositol 2-(L-cysteinylamino)-2-deoxy-alpha-D-glucopyranoside binding site. Acetyl-CoA contacts are provided by residues 78–80 (VVV) and 86–91 (RRGTGS). The region spanning 150–303 (VRFATYSGPH…AYAAVAPTDV (154 aa)) is the N-acetyltransferase domain. E177, K218, and E226 together coordinate 1D-myo-inositol 2-(L-cysteinylamino)-2-deoxy-alpha-D-glucopyranoside. 230-232 (VGV) provides a ligand contact to acetyl-CoA. Residue Y269 coordinates 1D-myo-inositol 2-(L-cysteinylamino)-2-deoxy-alpha-D-glucopyranoside. 274–279 (NTAAVK) serves as a coordination point for acetyl-CoA.

This sequence belongs to the acetyltransferase family. MshD subfamily. As to quaternary structure, monomer.

It catalyses the reaction 1D-myo-inositol 2-(L-cysteinylamino)-2-deoxy-alpha-D-glucopyranoside + acetyl-CoA = mycothiol + CoA + H(+). In terms of biological role, catalyzes the transfer of acetyl from acetyl-CoA to desacetylmycothiol (Cys-GlcN-Ins) to form mycothiol. This chain is Mycothiol acetyltransferase, found in Mycolicibacterium gilvum (strain PYR-GCK) (Mycobacterium gilvum (strain PYR-GCK)).